Here is a 500-residue protein sequence, read N- to C-terminus: Potassium voltage-gated channel subfamily V member 1 (500 aa).

The Cytoplasmic portion of the chain corresponds to 1-210 (MPSSGRALLD…EKPGSSTAAR (210 aa)). The segment covering 168–181 (KKDTEDQESQHESE) has biased composition (basic and acidic residues). The disordered stretch occupies residues 168–189 (KKDTEDQESQHESEQDFSQGPC). The chain crosses the membrane as a helical span at residues 211–231 (IFGVISIIFVVVSIINMALMS). At 232–238 (AELSWLD) the chain is on the extracellular side. The chain crosses the membrane as a helical span at residues 239-259 (LQLLEILEYVCISWFTGEFVL). Over 260–276 (RFLCVRDRCRFLRKVPN) the chain is Cytoplasmic. Residues 277–297 (IIDLLAILPFYITLLVESLSG) traverse the membrane as a helical segment. Over 298–309 (SQTTQELENVGR) the chain is Extracellular. Residues 310 to 331 (IVQVLRLLRALRMLKLGRHSTG) form a helical; Voltage-sensor membrane-spanning segment. At 332–345 (LRSLGMTITQCYEE) the chain is on the cytoplasmic side. The helical transmembrane segment at 346–366 (VGLLLLFLSVGISIFSTVEYF) threads the bilayer. A Selectivity filter motif is present at residues 392–397 (TVGYGD). The helical transmembrane segment at 407–427 (IVAFMCILSGILVLALPIAII) threads the bilayer. Residues 428–500 (NDRFSACYFT…RSSGGDDFWF (73 aa)) are Cytoplasmic-facing.

The protein belongs to the potassium channel family. V (TC 1.A.1.2) subfamily. Kv8.1/KCNV1 sub-subfamily. As to quaternary structure, heteromultimer with KCNB1 and KCNB2. Interacts with KCNC4 and KCND1. Detected in brain.

It localises to the cell membrane. Its function is as follows. Potassium channel subunit that does not form functional channels by itself. Modulates KCNB1 and KCNB2 channel activity by shifting the threshold for inactivation to more negative values and by slowing the rate of inactivation. Can down-regulate the channel activity of KCNB1, KCNB2, KCNC4 and KCND1, possibly by trapping them in intracellular membranes. The polypeptide is Potassium voltage-gated channel subfamily V member 1 (KCNV1) (Homo sapiens (Human)).